Here is a 320-residue protein sequence, read N- to C-terminus: Dual oxidase maturation factor 2 (320 aa).

A helical transmembrane segment spans residues 22 to 42 (VPLLIVILVFLSLAASFLFIL). Over 43–51 (PGIRGHSRW) the chain is Cytoplasmic. The chain crosses the membrane as a helical span at residues 52–72 (FWLVRVLLSLFIGAEIVAVHF). At 73-183 (SGDWFVGRVW…HLAGHYAAAT (111 aa)) the chain is on the extracellular side. 3 N-linked (GlcNAc...) asparagine glycosylation sites follow: N84, N109, and N121. A helical transmembrane segment spans residues 184 to 204 (LWVAFCFWIIANALLSMPAPL). Residues 205 to 206 (YG) are Cytoplasmic-facing. A helical membrane pass occupies residues 207–227 (GLALLTTGAFTLFGVFAFASI). The Extracellular segment spans residues 228-249 (SSVPLCHFRLGSAVLTPYYGAS). Residues 250–270 (FWLTLATGILSLLLGGAVVIL) traverse the membrane as a helical segment. The Cytoplasmic segment spans residues 271–320 (HYTRPSALRSFLDLSVKDCSNQAKGNSPLTLNNPQHEQLKSPDLNITTLL).

Belongs to the DUOXA family. Heterodimer with DUXA2; disulfide-linked. Interacts with CSNK1G2. Post-translationally, N-glycosylated.

It localises to the endoplasmic reticulum membrane. Its function is as follows. Required for the maturation and the transport from the endoplasmic reticulum to the plasma membrane of functional DUOX2. May play a role in thyroid hormone synthesis. The protein is Dual oxidase maturation factor 2 (Duoxa2) of Mus musculus (Mouse).